We begin with the raw amino-acid sequence, 77 residues long: Small ribosomal subunit protein bS18 (77 aa).

It belongs to the bacterial ribosomal protein bS18 family. Part of the 30S ribosomal subunit. Forms a tight heterodimer with protein bS6.

Functionally, binds as a heterodimer with protein bS6 to the central domain of the 16S rRNA, where it helps stabilize the platform of the 30S subunit. This chain is Small ribosomal subunit protein bS18, found in Shouchella clausii (strain KSM-K16) (Alkalihalobacillus clausii).